The chain runs to 301 residues: Thyroxine 5-deiodinase (301 aa).

Topologically, residues 1–41 (MSRQAAPRWVVGEGRGTLGGAATMLRSLLLHSLRLCSQTAS) are cytoplasmic. The helical; Signal-anchor for type II membrane protein transmembrane segment at 42 to 64 (CLVLFPRFLGTAFMLWLLDFLCI) threads the bilayer. Topologically, residues 65-301 (RKHLLGRRRR…QLHGPQPRRV (237 aa)) are extracellular. U167 is an active-site residue. Residue U167 is a non-standard amino acid, selenocysteine.

The protein belongs to the iodothyronine deiodinase family. As to quaternary structure, monomer. Homodimer. May undergo minor heretodimerization with DIO1 and DIO2. As to expression, highly expressed in mammary gland. Detected at lower levels in kidney, and at very low levels in the other tissues.

Its subcellular location is the cell membrane. It is found in the endosome membrane. The catalysed reaction is 3,3',5'-triiodo-L-thyronine + iodide + A + H(+) = L-thyroxine + AH2. The enzyme catalyses 3,3'-diiodo-L-thyronine + iodide + A + H(+) = 3,3',5-triiodo-L-thyronine + AH2. It carries out the reaction 3-iodo-L-thyronine + iodide + A + H(+) = 3,5-diiodo-L-thyronine + AH2. It catalyses the reaction L-thyronine + iodide + A + H(+) = 3-iodo-L-thyronine + AH2. The catalysed reaction is 3',5'-diiodo-L-thyronine + iodide + A + H(+) = 3,3',5'-triiodo-L-thyronine + AH2. The enzyme catalyses 3'-iodo-L-thyronine + iodide + A + H(+) = 3,3'-diiodo-L-thyronine + AH2. It carries out the reaction 3,3',5'-triiodothyronamine + iodide + A + H(+) = 3,3',5,5'-tetraiodothyronamine + AH2. It catalyses the reaction 3',5'-diiodothyronamine + iodide + A + H(+) = 3,3',5'-triiodothyronamine + AH2. The catalysed reaction is 3,3'-diiodothyronamine + iodide + A + H(+) = 3,3',5-triiodothyronamine + AH2. The enzyme catalyses 3-iodothyronamine + iodide + A + H(+) = 3,5-diiodothyronamine + AH2. It carries out the reaction 3'-iodothyronamine + iodide + A + H(+) = 3,3'-diiodothyronamine + AH2. It catalyses the reaction thyronamine + iodide + A + H(+) = 3-iodothyronamine + AH2. Plays a crucial role in the metabolism of thyroid hormones (TH) and has specific roles in TH activation and inactivation by deiodination. Catalyzes the deiodination of L-thyroxine (T4) to 3,3',5'-triiodothyronine (rT3), 3,5,3'-triiodothyronine (T3) to 3,3'-diiodothyronine (3,3'-T2), 3,5-diiodothyronine (3,5-T2) to 3-monoiodothyronine (3-T1), rT3 to 3',5'-diiodothyronine (3',5'-T2) and 3,3'-T2 to 3'-monoiodothyronine (3'-T1) via inner-ring deiodination (IRD). Catalyzes the deiodination of 3-T1 to L-thyronine (T0) via outer-ring deiodination (ORD). Catalyzes the tyrosyl ring deiodinations of 3,3',5,5'-tetraiodothyronamine, 3,3',5'-triiodothyronamine, 3,5,3'-triiodothyronamine, 3,5-diiodothyronamine, 3,3'-diiodothyronamine and 3-iodothyronamine. The chain is Thyroxine 5-deiodinase (DIO3) from Bos taurus (Bovine).